We begin with the raw amino-acid sequence, 215 residues long: Cytochrome b6 (215 aa).

The chain crosses the membrane as a helical span at residues 32 to 52 (IFYCLGGITLTCFLVQVATGF). Cys-35 lines the heme c pocket. 2 residues coordinate heme b: His-86 and His-100. A run of 3 helical transmembrane segments spans residues 90–110 (ASMM…TGGF), 116–136 (LTWV…VTGY), and 186–206 (LHTF…FLMI). The heme b site is built by His-187 and His-202.

This sequence belongs to the cytochrome b family. PetB subfamily. The 4 large subunits of the cytochrome b6-f complex are cytochrome b6, subunit IV (17 kDa polypeptide, PetD), cytochrome f and the Rieske protein, while the 4 small subunits are PetG, PetL, PetM and PetN. The complex functions as a dimer. Heme b is required as a cofactor. Heme c serves as cofactor.

Its subcellular location is the plastid. The protein localises to the chloroplast thylakoid membrane. In terms of biological role, component of the cytochrome b6-f complex, which mediates electron transfer between photosystem II (PSII) and photosystem I (PSI), cyclic electron flow around PSI, and state transitions. The sequence is that of Cytochrome b6 from Ostreococcus tauri.